The following is a 142-amino-acid chain: Hemoglobin subunit alpha-A (142 aa).

A Globin domain is found at 2 to 142 (VLSAADKGNV…VATVLTAKYR (141 aa)). An O2-binding site is contributed by His-59. A heme b-binding site is contributed by His-88.

Belongs to the globin family. As to quaternary structure, heterotetramer of two alpha chains and two beta chains. In terms of tissue distribution, red blood cells.

Its function is as follows. Involved in oxygen transport from the lung to the various peripheral tissues. The protein is Hemoglobin subunit alpha-A (HBAA) of Anseranas semipalmata (Magpie goose).